The following is a 121-amino-acid chain: Autophagy-related protein 8 (121 aa).

Residue Gly-116 is the site of Phosphatidylethanolamine amidated glycine attachment. Residues 117 to 121 (DFETA) constitute a propeptide, removed in mature form.

The protein belongs to the ATG8 family. In terms of processing, the C-terminal 5 residues are removed to expose Gly-116 at the C-terminus. The C-terminal Gly is then amidated with phosphatidylethanolamine by an activating system similar to that for ubiquitin.

It is found in the cytoplasmic vesicle. Its subcellular location is the autophagosome membrane. The protein resides in the vacuole membrane. Its function is as follows. Ubiquitin-like modifier involved in autophagosome formation. With cpr-1/atg4, mediates the delivery of the autophagosomes to the vacuole via the microtubule cytoskeleton. Required for selective autophagic degradation of the nucleus (nucleophagy) as well as for mitophagy which contributes to regulate mitochondrial quantity and quality by eliminating the mitochondria to a basal level to fulfill cellular energy requirements and preventing excess ROS production. Also participates in membrane fusion events that take place in the early secretory pathway. Also involved in endoplasmic reticulum-specific autophagic process and is essential for the survival of cells subjected to severe ER stress. The apg-6/atg8-PE conjugate mediates tethering between adjacent membranes and stimulates membrane hemifusion, leading to expansion of the autophagosomal membrane during autophagy. This is Autophagy-related protein 8 (apg-6) from Neurospora crassa (strain ATCC 24698 / 74-OR23-1A / CBS 708.71 / DSM 1257 / FGSC 987).